Reading from the N-terminus, the 1057-residue chain is Probable E3 ubiquitin-protein ligase HERC4 (1057 aa).

7 RCC1 repeats span residues 1–51, 52–101, 102–154, 156–207, 208–259, 261–311, and 313–366; these read MLCW…FVLD, DGTV…ALND, KGQV…ALSK, SEVF…VLTL, SGAI…ALTK, GGVF…AFVP, and SGRI…CVKR. One can recognise an HECT domain in the interval 730–1057; the sequence is KNIDYKKPLK…IDHNEGFSLI (328 aa). The Glycyl thioester intermediate role is filled by Cys1025.

Ubiquitously expressed, highest expression is found in testis during spermiogenesis. It is specifically found in spermatogonia, spermatocytes, and spermatids with little or no expression detectable in the spermatozoa, or interstitial cells.

The protein resides in the cytoplasm. The protein localises to the cytosol. It catalyses the reaction S-ubiquitinyl-[E2 ubiquitin-conjugating enzyme]-L-cysteine + [acceptor protein]-L-lysine = [E2 ubiquitin-conjugating enzyme]-L-cysteine + N(6)-ubiquitinyl-[acceptor protein]-L-lysine.. Its pathway is protein modification; protein ubiquitination. In terms of biological role, probable E3 ubiquitin-protein ligase involved in either protein trafficking or in the distribution of cellular structures. Required for spermatozoon maturation and fertility, and for the removal of the cytoplasmic droplet of the spermatozoon. E3 ubiquitin-protein ligases accept ubiquitin from an E2 ubiquitin-conjugating enzyme in the form of a thioester and then directly transfer it to targeted substrates. The polypeptide is Probable E3 ubiquitin-protein ligase HERC4 (Herc4) (Mus musculus (Mouse)).